Reading from the N-terminus, the 203-residue chain is Somatotropin (203 aa).

The N-terminal stretch at 1 to 17 is a signal peptide; the sequence is MDRVVIVLSVLSVAASS. Position 18 is a pyrrolidone carboxylic acid (Gln18). Residue His35 coordinates Zn(2+). Cys68 and Cys176 are joined by a disulfide. Glu185 contributes to the Zn(2+) binding site. Cys193 and Cys201 are disulfide-bonded.

The protein belongs to the somatotropin/prolactin family.

Its subcellular location is the secreted. Functionally, growth hormone plays an important role in growth control and is involved in the regulation of several anabolic processes. Implicated as an osmoregulatory substance important for seawater adaptation. The polypeptide is Somatotropin (gh) (Solea senegalensis (Senegalese sole)).